We begin with the raw amino-acid sequence, 1106 residues long: Protein shuttle craft (1106 aa).

2 disordered regions span residues 7–26 (QLTN…AMAD) and 189–371 (PAAA…KLSQ). Residues 189–201 (PAAATTNGNSTAS) are compositionally biased toward low complexity. Composition is skewed to basic and acidic residues over residues 232-270 (NYER…RDSR) and 278-323 (RRSD…RDRI). At T335 the chain carries Phosphothreonine. Phosphoserine occurs at positions 336, 339, 343, and 354. The segment covering 336–354 (SNESAHPSPEKQSQLQQIS) has biased composition (polar residues). An RING-type; atypical zinc finger spans residues 386–433 (CLVCVEAIKSHQPTWSCRNCYHMLHLKCTITWASSSKSEVGWRCPACQ). NF-X1-type zinc fingers lie at residues 474–492 (CSHA…PCQA), 527–546 (CGEH…ACSE), 585–604 (CGHH…PCKL), 644–667 (CGKP…PCPK), 706–725 (CGKH…DCPL), 733–752 (CGKH…PCYR), 844–867 (CGGH…ICRQ), and 876–896 (CGHK…PCKE). The R3H domain occupies 1006–1071 (TKSVYETLTD…NRNVVATAHK (66 aa)).

This sequence belongs to the NFX1 family. Ovaries and embryonic central nervous system.

The protein localises to the nucleus. Plays an essential role during the late stages of embryonic neurogenesis. May either fine-tune the guidance or the spatial maintenance of the migrating SNB and in nerve roots, which are composed of axons originating from distinct groups of motor neurons and may be required to either guide or maintain the position of these nerves along a direct and straight path to their ultimate targets in particular muscle fields. May play a role in egg chamber development and/or may confer essential maternal contributions to the early embryo. In Drosophila melanogaster (Fruit fly), this protein is Protein shuttle craft (stc).